The sequence spans 75 residues: ATP synthase subunit c (75 aa).

A run of 2 helical transmembrane segments spans residues 8–28 (FIAI…VANI) and 54–74 (AGMV…LMFV).

The protein belongs to the ATPase C chain family. As to quaternary structure, F-type ATPases have 2 components, F(1) - the catalytic core - and F(0) - the membrane proton channel. F(1) has five subunits: alpha(3), beta(3), gamma(1), delta(1), epsilon(1). F(0) has three main subunits: a(1), b(2) and c(10-14). The alpha and beta chains form an alternating ring which encloses part of the gamma chain. F(1) is attached to F(0) by a central stalk formed by the gamma and epsilon chains, while a peripheral stalk is formed by the delta and b chains.

Its subcellular location is the cell membrane. F(1)F(0) ATP synthase produces ATP from ADP in the presence of a proton or sodium gradient. F-type ATPases consist of two structural domains, F(1) containing the extramembraneous catalytic core and F(0) containing the membrane proton channel, linked together by a central stalk and a peripheral stalk. During catalysis, ATP synthesis in the catalytic domain of F(1) is coupled via a rotary mechanism of the central stalk subunits to proton translocation. Functionally, key component of the F(0) channel; it plays a direct role in translocation across the membrane. A homomeric c-ring of between 10-14 subunits forms the central stalk rotor element with the F(1) delta and epsilon subunits. This is ATP synthase subunit c from Wolbachia sp. subsp. Brugia malayi (strain TRS).